The following is a 253-amino-acid chain: Probable transcriptional regulatory protein Mlut_12910 (253 aa).

It belongs to the TACO1 family.

Its subcellular location is the cytoplasm. The chain is Probable transcriptional regulatory protein Mlut_12910 from Micrococcus luteus (strain ATCC 4698 / DSM 20030 / JCM 1464 / CCM 169 / CCUG 5858 / IAM 1056 / NBRC 3333 / NCIMB 9278 / NCTC 2665 / VKM Ac-2230) (Micrococcus lysodeikticus).